The chain runs to 373 residues: 3 beta-hydroxysteroid dehydrogenase/Delta 5--&gt;4-isomerase type 3 (373 aa).

The active-site Proton acceptor is tyrosine 155. Position 159 (lysine 159) interacts with NAD(+). A helical transmembrane segment spans residues 288–308; the sequence is VPILYWLAFLLETVSFLLSPI.

The protein belongs to the 3-beta-HSD family. As to expression, liver and kidney. Greater expression in liver.

The protein localises to the endoplasmic reticulum membrane. It is found in the mitochondrion membrane. The catalysed reaction is a 3beta-hydroxy-Delta(5)-steroid + NAD(+) = a 3-oxo-Delta(5)-steroid + NADH + H(+). It carries out the reaction a 3-oxo-Delta(5)-steroid = a 3-oxo-Delta(4)-steroid. It functions in the pathway lipid metabolism; steroid biosynthesis. Functionally, 3-beta-HSD is a bifunctional enzyme, that catalyzes the oxidative conversion of Delta(5)-ene-3-beta-hydroxy steroid, and the oxidative conversion of ketosteroids. The 3-beta-HSD enzymatic system plays a crucial role in the biosynthesis of all classes of hormonal steroids. This Mus musculus (Mouse) protein is 3 beta-hydroxysteroid dehydrogenase/Delta 5--&gt;4-isomerase type 3 (Hsd3b3).